The sequence spans 313 residues: RHOMBOID-like protein 7 (313 aa).

Acidic residues predominate over residues 1-11 (MLSTAAEEDPE). Residues 1 to 24 (MLSTAAEEDPEGGSRETNNGGETT) form a disordered region. Residues 15 to 24 (RETNNGGETT) are compositionally biased toward polar residues. Transmembrane regions (helical) follow at residues 31–51 (SWII…VMYY), 112–132 (WLHA…YIGV), 143–163 (VGTI…LFLE), 166–186 (ISVG…SELL), 196–216 (GVAI…GTLP), 221–241 (FAHI…LIHP), and 269–289 (LCIV…VILF). The Nucleophile role is filled by Ser-171. Catalysis depends on His-223, which acts as the Charge relay system.

This sequence belongs to the peptidase S54 family.

It localises to the membrane. It catalyses the reaction Cleaves type-1 transmembrane domains using a catalytic dyad composed of serine and histidine that are contributed by different transmembrane domains.. Its function is as follows. Probable rhomboid-type serine protease that catalyzes intramembrane proteolysis. May function in embryo development. This Arabidopsis thaliana (Mouse-ear cress) protein is RHOMBOID-like protein 7.